The following is a 252-amino-acid chain: Putative zinc finger CCCH domain-containing protein 58 (252 aa).

A C3H1-type zinc finger spans residues 35-62 (NHKSVLCMKWREGRCHNGVACRYAHGEE). Disordered stretches follow at residues 71 to 95 (RVGGGGTSMHARSSPPRDGASSGST), 109 to 180 (RHGR…SAAD), and 215 to 252 (TATSEPSATSDDDAITTTTSSSTTDADELDAAVAAPPK). Low complexity-rich tracts occupy residues 133 to 149 (SARSTAPTPPRAHTTPP) and 229 to 238 (ITTTTSSSTT).

The chain is Putative zinc finger CCCH domain-containing protein 58 from Oryza sativa subsp. japonica (Rice).